Reading from the N-terminus, the 209-residue chain is MTELDINEIEAYNSNKMGWIELITGCMFAGKTEEFIRRLKVLSYAKKRVLAFKPSIDNRYSVENIISHSGSKLDSYLVKSSDEIKQIVEKENQIQQVDVIGIDEVQFFDENVVDIIEQLADNGIIVIVNGLDKDFRGLPFKNVDKLLVKAEFVTKLRARCHLCGSFANRSQRIVNGQPALWDSPLILVDGKESYEARCRKCFISPKKDV.

ATP contacts are provided by residues 25–32 and 103–106; these read GCMFAGKT and DEVQ. The Proton acceptor role is filled by glutamate 104. Cysteine 160, cysteine 163, cysteine 198, and cysteine 201 together coordinate Zn(2+).

Belongs to the thymidine kinase family. In terms of assembly, homotetramer.

It is found in the cytoplasm. It carries out the reaction thymidine + ATP = dTMP + ADP + H(+). In Mycoplasma capricolum subsp. capricolum (strain California kid / ATCC 27343 / NCTC 10154), this protein is Thymidine kinase.